Here is a 131-residue protein sequence, read N- to C-terminus: MQSLSHAVKTSLPNYLSSLPVPDSVGGWFKLSFKDWLALIPPTAVVVGIGYISYQALCPAAQRKSCSGRCNDNIRKHEAKVVDMIDIENIADKAAFCRCWKTKNWPYCDGSHGEHNKNTGDNVGPVVIKRN.

The Lumenal segment spans residues 1 to 35 (MQSLSHAVKTSLPNYLSSLPVPDSVGGWFKLSFKD). Residues 36–58 (WLALIPPTAVVVGIGYISYQALC) traverse the membrane as a helical segment. At 59-131 (PAAQRKSCSG…NVGPVVIKRN (73 aa)) the chain is on the cytoplasmic side. C97, C99, C108, and H112 together coordinate [2Fe-2S] cluster.

Belongs to the CISD protein family. CISD2 subfamily. It depends on [2Fe-2S] cluster as a cofactor.

It localises to the endoplasmic reticulum membrane. The polypeptide is CDGSH iron-sulfur domain-containing protein 2 homolog (Drosophila mojavensis (Fruit fly)).